A 60-amino-acid chain; its full sequence is MAKSIQVKLVRSPIGRPEKHRKVLQALGLTRLNKTVNLHATPAVAGAVKKVIHMVEVKEL.

The protein belongs to the universal ribosomal protein uL30 family. As to quaternary structure, part of the 50S ribosomal subunit.

The sequence is that of Large ribosomal subunit protein uL30 from Syntrophobacter fumaroxidans (strain DSM 10017 / MPOB).